The chain runs to 160 residues: Cytochrome b6-f complex subunit 4 (160 aa).

3 helical membrane-spanning segments follow: residues 36–56, 95–115, and 128–148; these read LLYIFPVVILGTFACLVGLAV, LLGIVLQTLVPLGLMLIPFIE, and IAMAFFLFGTMITIYLGIGAC.

Belongs to the cytochrome b family. PetD subfamily. The 4 large subunits of the cytochrome b6-f complex are cytochrome b6, subunit IV (17 kDa polypeptide, PetD), cytochrome f and the Rieske protein, while the 4 small subunits are PetG, PetL, PetM and PetN. The complex functions as a dimer.

The protein resides in the cellular thylakoid membrane. In terms of biological role, component of the cytochrome b6-f complex, which mediates electron transfer between photosystem II (PSII) and photosystem I (PSI), cyclic electron flow around PSI, and state transitions. The chain is Cytochrome b6-f complex subunit 4 from Prochlorococcus marinus (strain MIT 9303).